The chain runs to 54 residues: Small polypeptide DEVIL 12 (54 aa).

The segment at 20–51 is required for DVL/RTFL small polypeptide activity; sequence NNKLTPNRSLKETRSRLYIIRRCLVMLLCWRE. N26 is a glycosylation site (N-linked (GlcNAc...) asparagine). Residues 31–48 form a helical membrane-spanning segment; that stretch reads ETRSRLYIIRRCLVMLLC.

Belongs to the DVL/RTFL small polypeptides family.

It is found in the cell membrane. In terms of biological role, small polypeptide acting as a regulatory molecule which coordinates cellular responses required for differentiation, growth and development, probably by restricting polar cell proliferation in lateral organs and coordinating socket cell recruitment and differentiation at trichome sites. This Arabidopsis thaliana (Mouse-ear cress) protein is Small polypeptide DEVIL 12.